The primary structure comprises 364 residues: Methylthioribose-1-phosphate isomerase (364 aa).

Substrate contacts are provided by residues 46–48, arginine 89, and glutamine 196; that span reads RGA. Aspartate 237 serves as the catalytic Proton donor. Residue 247–248 coordinates substrate; it reads NK.

Belongs to the eIF-2B alpha/beta/delta subunits family. MtnA subfamily.

It carries out the reaction 5-(methylsulfanyl)-alpha-D-ribose 1-phosphate = 5-(methylsulfanyl)-D-ribulose 1-phosphate. The protein operates within amino-acid biosynthesis; L-methionine biosynthesis via salvage pathway; L-methionine from S-methyl-5-thio-alpha-D-ribose 1-phosphate: step 1/6. In terms of biological role, catalyzes the interconversion of methylthioribose-1-phosphate (MTR-1-P) into methylthioribulose-1-phosphate (MTRu-1-P). The sequence is that of Methylthioribose-1-phosphate isomerase from Pelotomaculum thermopropionicum (strain DSM 13744 / JCM 10971 / SI).